Reading from the N-terminus, the 300-residue chain is Porphobilinogen deaminase (300 aa).

Cys-239 is modified (S-(dipyrrolylmethanemethyl)cysteine).

It belongs to the HMBS family. In terms of assembly, monomer. Dipyrromethane serves as cofactor.

The catalysed reaction is 4 porphobilinogen + H2O = hydroxymethylbilane + 4 NH4(+). The protein operates within porphyrin-containing compound metabolism; protoporphyrin-IX biosynthesis; coproporphyrinogen-III from 5-aminolevulinate: step 2/4. Tetrapolymerization of the monopyrrole PBG into the hydroxymethylbilane pre-uroporphyrinogen in several discrete steps. This is Porphobilinogen deaminase from Francisella tularensis subsp. holarctica (strain FTNF002-00 / FTA).